A 257-amino-acid chain; its full sequence is Zinc transporter ZupT (257 aa).

3 helical membrane passes run 5 to 25, 32 to 52, and 61 to 81; these read LILT…GVLG, VLAF…LMEM, and GMSP…YFGL. Positions 120 and 123 each coordinate Fe(2+). The Zn(2+) site is built by glutamate 123 and histidine 148. Asparagine 149, glutamate 152, and glutamate 181 together coordinate Fe(2+). Glutamate 152 contributes to the Zn(2+) binding site. 3 consecutive transmembrane segments (helical) span residues 182 to 202, 203 to 223, and 236 to 256; these read IFGG…IVMA, AIMA…LMPL, and GVLC…TIGI.

This sequence belongs to the ZIP transporter (TC 2.A.5) family. ZupT subfamily.

It is found in the cell inner membrane. The catalysed reaction is Zn(2+)(in) = Zn(2+)(out). Functionally, mediates zinc uptake. May also transport other divalent cations. The sequence is that of Zinc transporter ZupT from Salmonella arizonae (strain ATCC BAA-731 / CDC346-86 / RSK2980).